Consider the following 392-residue polypeptide: Putative cystathionine gamma-lyase (392 aa).

Residues 1–10 (MSDSATTDSA) show a composition bias toward polar residues. The segment at 1–41 (MSDSATTDSAGTGGERSASAPGDGTRAVRAGLPEPVKHEPT) is disordered. N6-(pyridoxal phosphate)lysine is present on Lys216.

This sequence belongs to the trans-sulfuration enzymes family. Requires pyridoxal 5'-phosphate as cofactor.

It is found in the cytoplasm. The catalysed reaction is L,L-cystathionine + H2O = 2-oxobutanoate + L-cysteine + NH4(+). Its pathway is amino-acid biosynthesis; L-cysteine biosynthesis; L-cysteine from L-homocysteine and L-serine: step 2/2. In Streptomyces coelicolor (strain ATCC BAA-471 / A3(2) / M145), this protein is Putative cystathionine gamma-lyase (cysA).